Reading from the N-terminus, the 337-residue chain is Anthranilate phosphoribosyltransferase (337 aa).

5-phospho-alpha-D-ribose 1-diphosphate-binding positions include Gly81, 84-85 (GD), Ser89, 91-94 (NVST), 109-117 (KHGNRAASS), and Ala121. Gly81 contacts anthranilate. Ser93 lines the Mg(2+) pocket. Asn112 provides a ligand contact to anthranilate. Anthranilate is bound at residue Arg167. Residues Asp226 and Glu227 each contribute to the Mg(2+) site.

This sequence belongs to the anthranilate phosphoribosyltransferase family. As to quaternary structure, homodimer. Mg(2+) serves as cofactor.

The enzyme catalyses N-(5-phospho-beta-D-ribosyl)anthranilate + diphosphate = 5-phospho-alpha-D-ribose 1-diphosphate + anthranilate. It participates in amino-acid biosynthesis; L-tryptophan biosynthesis; L-tryptophan from chorismate: step 2/5. Catalyzes the transfer of the phosphoribosyl group of 5-phosphorylribose-1-pyrophosphate (PRPP) to anthranilate to yield N-(5'-phosphoribosyl)-anthranilate (PRA). This is Anthranilate phosphoribosyltransferase from Methylobacterium sp. (strain 4-46).